The chain runs to 972 residues: Optomotor-blind protein (972 aa).

Disordered stretches follow at residues 44 to 248 (SLLT…YFPA), 263 to 286 (PGLYPGGGLRFPPHHPGAHPHAHH), 508 to 563 (AKGF…HPHA), 645 to 676 (ADVERDGSDSSCSESVGGSTGGAFRPTSTGSP), 805 to 889 (AVTP…PSEL), and 918 to 972 (EEAA…GTDQ). 2 stretches are compositionally biased toward low complexity: residues 49 to 80 (GSNNNNSGNTNSGNNNSNSNNNTNSNTNNTNN) and 97 to 142 (SNHS…NNTS). Residues 155-176 (PPSPAGTPPPTIVGLPPIPPPN) show a composition bias toward pro residues. Low complexity-rich tracts occupy residues 177–193 (NNSSSSSSNNSASAAAH) and 201–212 (AHHSPSTGAAAP). Residues 213–225 (PAGPTGLPPPTPP) are compositionally biased toward pro residues. A compositionally biased stretch (low complexity) spans 226 to 237 (HHLQQQQQQQQH). Positions 274–286 (PPHHPGAHPHAHH) are enriched in basic residues. A DNA-binding region (T-box) is located at residues 332–513 (LEGKDLWEKF…NNPFAKGFRD (182 aa)). Gly residues predominate over residues 818-831 (PPGGGGGGLGGGVV). Residues 835–851 (PRSLSSSPRPRPASHSP) are compositionally biased toward low complexity. The residue at position 887 (Ser887) is a Phosphoserine. Positions 952–963 (HPHHQTHLHSHH) are enriched in basic residues.

In terms of tissue distribution, in third-instar larvae, expressed in the brain region that will develop into optic lobes and more weakly in the thoracic part of the ventral ganglion.

The protein resides in the nucleus. Its function is as follows. Essential protein that may function as a transcription regulator. Vital for pupal development. Required for proper development of the optic lobes and wings, and abdominal pigmentation. This chain is Optomotor-blind protein (bi), found in Drosophila melanogaster (Fruit fly).